Here is a 244-residue protein sequence, read N- to C-terminus: 5-oxoprolinase subunit A (244 aa).

It belongs to the LamB/PxpA family. In terms of assembly, forms a complex composed of PxpA, PxpB and PxpC.

It catalyses the reaction 5-oxo-L-proline + ATP + 2 H2O = L-glutamate + ADP + phosphate + H(+). Catalyzes the cleavage of 5-oxoproline to form L-glutamate coupled to the hydrolysis of ATP to ADP and inorganic phosphate. The chain is 5-oxoprolinase subunit A from Salmonella choleraesuis (strain SC-B67).